The chain runs to 497 residues: Probable malate:quinone oxidoreductase (497 aa).

This sequence belongs to the MQO family. Requires FAD as cofactor.

The enzyme catalyses (S)-malate + a quinone = a quinol + oxaloacetate. It functions in the pathway carbohydrate metabolism; tricarboxylic acid cycle; oxaloacetate from (S)-malate (quinone route): step 1/1. The protein is Probable malate:quinone oxidoreductase of Hahella chejuensis (strain KCTC 2396).